A 132-amino-acid chain; its full sequence is Ribosome-binding factor A (132 aa).

This sequence belongs to the RbfA family. As to quaternary structure, monomer. Binds 30S ribosomal subunits, but not 50S ribosomal subunits or 70S ribosomes.

It is found in the cytoplasm. In terms of biological role, one of several proteins that assist in the late maturation steps of the functional core of the 30S ribosomal subunit. Associates with free 30S ribosomal subunits (but not with 30S subunits that are part of 70S ribosomes or polysomes). Required for efficient processing of 16S rRNA. May interact with the 5'-terminal helix region of 16S rRNA. The sequence is that of Ribosome-binding factor A from Edwardsiella ictaluri (strain 93-146).